The primary structure comprises 316 residues: Ribosomal RNA small subunit methyltransferase H (316 aa).

S-adenosyl-L-methionine contacts are provided by residues 35-37 (GGH), D55, F79, D101, and Q108.

Belongs to the methyltransferase superfamily. RsmH family.

Its subcellular location is the cytoplasm. It carries out the reaction cytidine(1402) in 16S rRNA + S-adenosyl-L-methionine = N(4)-methylcytidine(1402) in 16S rRNA + S-adenosyl-L-homocysteine + H(+). In terms of biological role, specifically methylates the N4 position of cytidine in position 1402 (C1402) of 16S rRNA. The protein is Ribosomal RNA small subunit methyltransferase H of Vibrio campbellii (strain ATCC BAA-1116).